The chain runs to 1076 residues: Histone deacetylase 4 (1076 aa).

Residues 66–169 (REQQLQQELL…GKESAVASTE (104 aa)) adopt a coiled-coil conformation. The interval 117-312 (MLAMKHQQEL…NSSSGNVSTE (196 aa)) is interaction with MEF2A. Residues 132–162 (KLERHRQEQELEKQHREQKLQQLKNKEKGKE) show a composition bias toward basic and acidic residues. Disordered stretches follow at residues 132 to 166 (KLER…SAVA), 205 to 225 (TQHS…ASYN), and 239 to 323 (PLRK…PSAP). Residues 205–224 (TQHSSLDQSSPPQSGVSASY) are compositionally biased toward polar residues. Ser-209 is modified (phosphoserine). Phosphoserine; by CaMK4 and SIK1 is present on Ser-245. A compositionally biased stretch (basic and acidic residues) spans 258–273 (KVAERRSSPLLRRKDG). Residues 289–310 (SACSSAPGSGPSSPNSSSGNVS) show a composition bias toward low complexity. Positions 348 to 353 (PSLPNI) match the PxLPxI/L motif; mediates interaction with ANKRA2 and 14-3-3 proteins motif. Ser-349 is subject to Phosphoserine. Ser-465 is modified (phosphoserine; by CaMK4 and SIK1). Disordered stretches follow at residues 506-529 (ISKP…ELRE), 541-580 (RLPG…QRPA), and 622-645 (RPLS…EPPT). Residues 514 to 529 (RQPESHPEETEEELRE) are compositionally biased toward basic and acidic residues. Lys-556 is covalently cross-linked (Glycyl lysine isopeptide (Lys-Gly) (interchain with G-Cter in SUMO)). Ser-562 carries the post-translational modification Phosphoserine. The segment covering 626–638 (RAQSSPASATFPM) has biased composition (polar residues). Phosphoserine; by CaMK4 is present on Ser-629. Ser-630 is modified (phosphoserine). The histone deacetylase stretch occupies residues 652–1076 (GLVYDTLMLK…EEPMEEEPPL (425 aa)). 4 residues coordinate Zn(2+): Cys-664, Cys-666, His-672, and Cys-743. The active site involves His-795. A Nuclear export signal motif is present at residues 1043-1076 (EEAETVTAMASLSVGVKPAEKRSEEEPMEEEPPL).

Belongs to the histone deacetylase family. HD type 2 subfamily. Homodimer. Homodimerization via its N-terminal domain. Interacts with HDAC7. Interacts with MEF2A, MEF2C, MEF2D, MORC2 and NR2C1. Interacts with a 14-3-3 chaperone proteins in a phosphorylation dependent manner. Interacts with 14-3-3 protein YWHAB. Interacts with BTBD14B. Interacts with KDM5B. Interacts (via PxLPxI/L motif) with ANKRA2 (via ankyrin repeats). Interacts with CUL7 (as part of the 3M complex); negatively regulated by ANKRA2. Interacts with EP300 in the presence of TFAP2C. Interacts with AHRR. Interacts with MYOCD. Interacts with HSPA1A and HSPA1B leading to their deacetylation at 'Lys-77'. Interacts with ZBTB7B; the interaction allows the recruitment of HDAC4 on CD8 loci for deacetylation and possible inhibition of CD8 genes expression. Interacts with DHX36. Interacts with SIK3; this interaction leads to HDAC4 retention in the cytoplasm. Interacts with ZNF638. In terms of processing, phosphorylated by CaMK4 at Ser-245, Ser-465 and Ser-629. Phosphorylation at other residues by CaMK2D is required for the interaction with 14-3-3. Phosphorylation at Ser-349, within the PxLPxI/L motif, impairs the binding of ANKRA2 but generates a high-affinity docking site for 14-3-3. Post-translationally, sumoylation on Lys-556 is promoted by the E3 SUMO-protein ligase RANBP2, and prevented by phosphorylation by CaMK4.

It localises to the nucleus. The protein localises to the cytoplasm. It carries out the reaction N(6)-acetyl-L-lysyl-[histone] + H2O = L-lysyl-[histone] + acetate. In terms of biological role, responsible for the deacetylation of lysine residues on the N-terminal part of the core histones (H2A, H2B, H3 and H4). Histone deacetylation gives a tag for epigenetic repression and plays an important role in transcriptional regulation, cell cycle progression and developmental events. Histone deacetylases act via the formation of large multiprotein complexes. Involved in muscle maturation via its interaction with the myocyte enhancer factors such as MEF2A, MEF2C and MEF2D. Deacetylates HSPA1A and HSPA1A at 'Lys-77' leading to their preferential binding to co-chaperone STUB1. The sequence is that of Histone deacetylase 4 (Hdac4) from Mus musculus (Mouse).